Reading from the N-terminus, the 426-residue chain is Tol-Pal system protein TolB (426 aa).

Residues 1–25 (MNAMSRISRRIFLALALSLAGLAQA) form the signal peptide.

It belongs to the TolB family. As to quaternary structure, the Tol-Pal system is composed of five core proteins: the inner membrane proteins TolA, TolQ and TolR, the periplasmic protein TolB and the outer membrane protein Pal. They form a network linking the inner and outer membranes and the peptidoglycan layer.

The protein resides in the periplasm. Functionally, part of the Tol-Pal system, which plays a role in outer membrane invagination during cell division and is important for maintaining outer membrane integrity. The polypeptide is Tol-Pal system protein TolB (Dechloromonas aromatica (strain RCB)).